The primary structure comprises 286 residues: Pyridoxal kinase PdxY (286 aa).

Residues S9 and 44-45 contribute to the substrate site; that span reads TQ. ATP contacts are provided by residues D111, A143, E148, K181, and 208–211; that span reads RPLV. A substrate-binding site is contributed by D223.

The protein belongs to the pyridoxine kinase family. PdxY subfamily. Homodimer. Mg(2+) serves as cofactor.

It carries out the reaction pyridoxal + ATP = pyridoxal 5'-phosphate + ADP + H(+). It functions in the pathway cofactor metabolism; pyridoxal 5'-phosphate salvage; pyridoxal 5'-phosphate from pyridoxal: step 1/1. Pyridoxal kinase involved in the salvage pathway of pyridoxal 5'-phosphate (PLP). Catalyzes the phosphorylation of pyridoxal to PLP. In Salmonella choleraesuis (strain SC-B67), this protein is Pyridoxal kinase PdxY.